Reading from the N-terminus, the 432-residue chain is Phosphomethylpyrimidine synthase (432 aa).

Residues N66, M95, Y124, H163, 185 to 187, 226 to 229, and E265 each bind substrate; these read SRG and DGLR. A Zn(2+)-binding site is contributed by H269. Y292 is a binding site for substrate. Zn(2+) is bound at residue H333. 3 residues coordinate [4Fe-4S] cluster: C409, C412, and C416.

The protein belongs to the ThiC family. [4Fe-4S] cluster serves as cofactor.

It carries out the reaction 5-amino-1-(5-phospho-beta-D-ribosyl)imidazole + S-adenosyl-L-methionine = 4-amino-2-methyl-5-(phosphooxymethyl)pyrimidine + CO + 5'-deoxyadenosine + formate + L-methionine + 3 H(+). The protein operates within cofactor biosynthesis; thiamine diphosphate biosynthesis. Catalyzes the synthesis of the hydroxymethylpyrimidine phosphate (HMP-P) moiety of thiamine from aminoimidazole ribotide (AIR) in a radical S-adenosyl-L-methionine (SAM)-dependent reaction. The chain is Phosphomethylpyrimidine synthase from Desulforamulus reducens (strain ATCC BAA-1160 / DSM 100696 / MI-1) (Desulfotomaculum reducens).